The primary structure comprises 175 residues: uncharacterized protein (175 aa).

Residues 107–138 (KTEEEAEKTLQEIERKIFKKLWENLDKERKRE) adopt a coiled-coil conformation.

This is an uncharacterized protein from Aquifex aeolicus (strain VF5).